The primary structure comprises 374 residues: MADSRDEPLVLGIETSCDETGVGVVRGTTLLADAVASSVDEHARFGGVVPEVASRAHLEAMVPTIDRALKEAGVSARDLDGIAVTAGPGLAGALLVGVSAAKAYAYALGKPLYGVNHLASHICVDQLEHGALPEPTMALLVSGGHSSLLLSTDITSDVRPLGATIDDAAGEAFDKIARVLNLGFPGGPVIDRYAREGDPNAIAFPRGLTGPRDAAYDFSFSGLKTAVARWIEAKRAAGEEVPVRDVSASFQEAVVDVLTRKAVRACKDEGVDHLMIGGGVAANSRLRALAQERCEAAGIRLRVPRPKLCTDNGAMVAALGAEMVARNRAASDWDLSADSSLPVTEPHVPGQGHPHGHPHGHDHVHEVSKENLYS.

Residues His-117 and His-121 each contribute to the Fe cation site. Substrate contacts are provided by residues 140-144 (LVSGG), Asp-174, Gly-187, Asp-191, and Asn-283. Asp-311 lines the Fe cation pocket. Over residues 337-352 (ADSSLPVTEPHVPGQG) the composition is skewed to low complexity. The interval 337–374 (ADSSLPVTEPHVPGQGHPHGHPHGHDHVHEVSKENLYS) is disordered. Over residues 359–374 (HGHDHVHEVSKENLYS) the composition is skewed to basic and acidic residues.

It belongs to the KAE1 / TsaD family. Fe(2+) is required as a cofactor.

It localises to the cytoplasm. The enzyme catalyses L-threonylcarbamoyladenylate + adenosine(37) in tRNA = N(6)-L-threonylcarbamoyladenosine(37) in tRNA + AMP + H(+). Its function is as follows. Required for the formation of a threonylcarbamoyl group on adenosine at position 37 (t(6)A37) in tRNAs that read codons beginning with adenine. Is involved in the transfer of the threonylcarbamoyl moiety of threonylcarbamoyl-AMP (TC-AMP) to the N6 group of A37, together with TsaE and TsaB. TsaD likely plays a direct catalytic role in this reaction. The protein is tRNA N6-adenosine threonylcarbamoyltransferase of Streptomyces coelicolor (strain ATCC BAA-471 / A3(2) / M145).